Consider the following 430-residue polypeptide: 3-phosphoshikimate 1-carboxyvinyltransferase (430 aa).

3-phosphoshikimate contacts are provided by lysine 23, serine 24, and arginine 28. A phosphoenolpyruvate-binding site is contributed by lysine 23. Glycine 93 and arginine 121 together coordinate phosphoenolpyruvate. Residues serine 166, glutamine 168, aspartate 313, and lysine 340 each coordinate 3-phosphoshikimate. Glutamine 168 contacts phosphoenolpyruvate. The active-site Proton acceptor is the aspartate 313. Phosphoenolpyruvate contacts are provided by arginine 344 and arginine 386.

This sequence belongs to the EPSP synthase family. Monomer.

It localises to the cytoplasm. It carries out the reaction 3-phosphoshikimate + phosphoenolpyruvate = 5-O-(1-carboxyvinyl)-3-phosphoshikimate + phosphate. Its pathway is metabolic intermediate biosynthesis; chorismate biosynthesis; chorismate from D-erythrose 4-phosphate and phosphoenolpyruvate: step 6/7. In terms of biological role, catalyzes the transfer of the enolpyruvyl moiety of phosphoenolpyruvate (PEP) to the 5-hydroxyl of shikimate-3-phosphate (S3P) to produce enolpyruvyl shikimate-3-phosphate and inorganic phosphate. The sequence is that of 3-phosphoshikimate 1-carboxyvinyltransferase from Anaeromyxobacter sp. (strain Fw109-5).